We begin with the raw amino-acid sequence, 64 residues long: Large ribosomal subunit protein bL33 (64 aa).

It belongs to the bacterial ribosomal protein bL33 family.

The sequence is that of Large ribosomal subunit protein bL33 from Synechococcus sp. (strain JA-2-3B'a(2-13)) (Cyanobacteria bacterium Yellowstone B-Prime).